Consider the following 127-residue polypeptide: Aspartate 1-decarboxylase (127 aa).

Ser25 acts as the Schiff-base intermediate with substrate; via pyruvic acid in catalysis. At Ser25 the chain carries Pyruvic acid (Ser). Thr57 is a binding site for substrate. Tyr58 functions as the Proton donor in the catalytic mechanism. 73-75 (GAA) contributes to the substrate binding site.

Belongs to the PanD family. Heterooctamer of four alpha and four beta subunits. It depends on pyruvate as a cofactor. Post-translationally, is synthesized initially as an inactive proenzyme, which is activated by self-cleavage at a specific serine bond to produce a beta-subunit with a hydroxyl group at its C-terminus and an alpha-subunit with a pyruvoyl group at its N-terminus.

Its subcellular location is the cytoplasm. It catalyses the reaction L-aspartate + H(+) = beta-alanine + CO2. It functions in the pathway cofactor biosynthesis; (R)-pantothenate biosynthesis; beta-alanine from L-aspartate: step 1/1. Functionally, catalyzes the pyruvoyl-dependent decarboxylation of aspartate to produce beta-alanine. The protein is Aspartate 1-decarboxylase of Clostridium botulinum (strain 657 / Type Ba4).